Here is a 233-residue protein sequence, read N- to C-terminus: Thrombin-like enzyme elegaxobin-1 (233 aa).

Positions 1–224 (VIGGDECNIN…HLDWIKGIIA (224 aa)) constitute a Peptidase S1 domain. 6 cysteine pairs are disulfide-bonded: Cys-7–Cys-138, Cys-25–Cys-41, Cys-73–Cys-231, Cys-117–Cys-185, Cys-149–Cys-164, and Cys-175–Cys-200. Active-site charge relay system residues include His-40 and Asp-85. The active-site Charge relay system is the Ser-179.

This sequence belongs to the peptidase S1 family. Snake venom subfamily. Monomer. In terms of tissue distribution, expressed by the venom gland.

Its subcellular location is the secreted. Thrombin-like snake venom serine protease that clots rabbit fibrinogen. Only the beta chain of fibrinogen (FGB) is cleaved, releasing fibrinopeptide B. Incubation with human fibrinogen alpha and beta resulted in cleavage of both fibrinogen chains but generated neither fibrinopeptide A nor fibrinopeptide B. Promotes clotting of rabbit fibrinogen, but not bovine or human fibrinogen. The sequence is that of Thrombin-like enzyme elegaxobin-1 from Protobothrops elegans (Elegant pitviper).